The primary structure comprises 285 residues: Pantothenate synthetase (285 aa).

30–37 provides a ligand contact to ATP; it reads MGYLHEGH. H37 (proton donor) is an active-site residue. Q61 provides a ligand contact to (R)-pantoate. Q61 lines the beta-alanine pocket. 148-151 serves as a coordination point for ATP; it reads GKKD. Position 154 (Q154) interacts with (R)-pantoate. Residues I177 and 185-188 each bind ATP; that span reads LSSR.

This sequence belongs to the pantothenate synthetase family. In terms of assembly, homodimer.

It localises to the cytoplasm. It carries out the reaction (R)-pantoate + beta-alanine + ATP = (R)-pantothenate + AMP + diphosphate + H(+). It participates in cofactor biosynthesis; (R)-pantothenate biosynthesis; (R)-pantothenate from (R)-pantoate and beta-alanine: step 1/1. Functionally, catalyzes the condensation of pantoate with beta-alanine in an ATP-dependent reaction via a pantoyl-adenylate intermediate. This chain is Pantothenate synthetase, found in Leptospira borgpetersenii serovar Hardjo-bovis (strain JB197).